Consider the following 828-residue polypeptide: Glycerol-3-phosphate acyltransferase 1, mitochondrial (828 aa).

Residues 1-87 (MDESALTLGT…FFNPSIPSLG (87 aa)) are Cytoplasmic-facing. The important for mitochondrial localization stretch occupies residues 80–120 (NPSIPSLGLRNVIYINETHTRHRGWLARRLSYVLFIQERDV). An intramembrane segment occupies 88-118 (LRNVIYINETHTRHRGWLARRLSYVLFIQER). The Cytoplasmic portion of the chain corresponds to 119–828 (DVHKGMFATN…LEYILSFVVL (710 aa)). An HXXXXD motif motif is present at residues 230 to 235 (HRSHID). CoA-binding residues include R278, R279, K288, R293, and R328. S380 carries the post-translational modification Phosphoserine. The interval 435–455 (SRPSDAADEGRDTSINESRNA) is disordered. The segment covering 442–455 (DEGRDTSINESRNA) has biased composition (basic and acidic residues). R462 provides a ligand contact to CoA. 2 positions are modified to phosphoserine: S688 and S695. An N6-acetyllysine mark is found at K780 and K784.

It belongs to the GPAT/DAPAT family.

The protein resides in the mitochondrion outer membrane. It catalyses the reaction sn-glycerol 3-phosphate + an acyl-CoA = a 1-acyl-sn-glycero-3-phosphate + CoA. The enzyme catalyses (9Z,12Z)-octadecadienoyl-CoA + sn-glycerol 3-phosphate = 1-(9Z,12Z)-octadecadienoyl-sn-glycero-3-phosphate + CoA. It carries out the reaction sn-glycerol 3-phosphate + (9Z)-octadecenoyl-CoA = 1-(9Z-octadecenoyl)-sn-glycero-3-phosphate + CoA. The catalysed reaction is sn-glycerol 3-phosphate + octadecanoyl-CoA = 1-octadecanoyl-sn-glycero-3-phosphate + CoA. It catalyses the reaction sn-glycerol 3-phosphate + hexadecanoyl-CoA = 1-hexadecanoyl-sn-glycero-3-phosphate + CoA. The enzyme catalyses dodecanoyl-CoA + sn-glycerol 3-phosphate = 1-dodecanoyl-sn-glycerol 3-phosphate + CoA. It carries out the reaction 1-acyl-sn-glycero-3-phospho-(1'-sn-glycerol) + an acyl-CoA = a 1,2-diacyl-sn-glycero-3-phospho-(1'-sn-glycerol) + CoA. It participates in phospholipid metabolism; CDP-diacylglycerol biosynthesis; CDP-diacylglycerol from sn-glycerol 3-phosphate: step 1/3. Mitochondrial membrane protein that catalyzes the essential first step of biosynthesis of glycerolipids such as triglycerides, phosphatidic acids and lysophosphatidic acids. Esterifies acyl-group from acyl-coenzyme A (acyl-CoA) to the sn-1 position of glycerol-3-phosphate, to produce lysophosphatidic acid. Has a narrow hydrophobic binding cleft that selects for a linear acyl chain. Catalytic activity is higher for substrates with a 16-carbon acyl chain. This is Glycerol-3-phosphate acyltransferase 1, mitochondrial from Homo sapiens (Human).